The following is an 81-amino-acid chain: uncharacterized protein (81 aa).

Transmembrane regions (helical) follow at residues 4-24 (IFKM…FNYT) and 61-81 (NIYT…LHII).

It localises to the cell membrane. This is an uncharacterized protein from Bacillus subtilis (strain 168).